Reading from the N-terminus, the 111-residue chain is MADWARAQSPGAVEEILDRENKRMADNLASKVTRLKSLALDIDKDAEDQNRYLDGMDSDFTSMTGLLTGSVKRFSTMARSGRDNRKLLCGMAVGLIVAFFILSYFLSRART.

Residues 1–86 (MADWARAQSP…MARSGRDNRK (86 aa)) are Cytoplasmic-facing. Ser9 and Ser37 each carry phosphoserine. Residues 15 to 77 (EILDRENKRM…TGSVKRFSTM (63 aa)) form the t-SNARE coiled-coil homology domain. A helical; Anchor for type IV membrane protein membrane pass occupies residues 87–107 (LLCGMAVGLIVAFFILSYFLS). Residues 108–111 (RART) lie on the Lumenal side of the membrane.

In terms of assembly, component of a SNARE complex consisting of STX5, YKT6, GOSR1 and BET1L. Interacts with STX5.

Its subcellular location is the golgi apparatus membrane. It localises to the golgi apparatus. It is found in the trans-Golgi network membrane. Its function is as follows. Vesicle SNARE required for targeting and fusion of retrograde transport vesicles with the Golgi complex. Required for the integrity of the Golgi complex. The sequence is that of BET1-like protein from Pongo abelii (Sumatran orangutan).